The following is a 148-amino-acid chain: Small ribosomal subunit protein eS19 (148 aa).

It belongs to the eukaryotic ribosomal protein eS19 family.

The sequence is that of Small ribosomal subunit protein eS19 (rps19) from Dictyostelium discoideum (Social amoeba).